A 434-amino-acid polypeptide reads, in one-letter code: (3,5-dihydroxyphenyl)acetyl-CoA 1,2-dioxygenase (434 aa).

Substrate is bound by residues Asp-184, Glu-190, 223–226 (HPRY), 234–239 (AGINLK), Gly-293, 322–324 (IPG), and Gln-413.

This sequence belongs to the enoyl-CoA hydratase/isomerase family. In terms of assembly, homohexamer; dimer of trimers.

The catalysed reaction is (3,5-dihydroxyphenyl)acetyl-CoA + O2 = 2-(3,5-dihydroxyphenyl)-2-oxoacetate + CoA + H(+). Involved in the biosynthesis of the nonproteinogenic amino acid monomer (S)-3,5-dihydroxyphenylglycine (Dpg) responsible of the production of vancomycin and teicoplanin antibiotics. Catalyzes the unusual conversion 3,5-dihydroxyphenylacetyl-CoA (DPA-CoA) to 3,5-dihydroxyphenylglyoxylate. DpgC performed a net four-electron oxidation of the benzylic carbon of DPA-CoA and the hydrolysis of the thioester bond to generate free CoA. It can also use phenylacetyl-CoA (PA-CoA) as substrate. The protein is (3,5-dihydroxyphenyl)acetyl-CoA 1,2-dioxygenase (dpgC) of Amycolatopsis orientalis (Nocardia orientalis).